The sequence spans 143 residues: Anti-sigma F factor (143 aa).

Belongs to the anti-sigma-factor family.

The catalysed reaction is L-seryl-[protein] + ATP = O-phospho-L-seryl-[protein] + ADP + H(+). It carries out the reaction L-threonyl-[protein] + ATP = O-phospho-L-threonyl-[protein] + ADP + H(+). Binds to sigma F and blocks its ability to form an RNA polymerase holoenzyme (E-sigma F). Phosphorylates SpoIIAA on a serine residue. This phosphorylation may enable SpoIIAA to act as an anti-anti-sigma factor that counteracts SpoIIAB and thus releases sigma F from inhibition. This Clostridium beijerinckii (strain ATCC 51743 / NCIMB 8052) (Clostridium acetobutylicum) protein is Anti-sigma F factor.